The primary structure comprises 74 residues: U5-theraphotoxin-Cg1a (74 aa).

Residues methionine 1–alanine 19 form the signal peptide. The propeptide occupies alanine 20 to arginine 39. 3 cysteine pairs are disulfide-bonded: cysteine 42/cysteine 56, cysteine 49/cysteine 61, and cysteine 55/cysteine 71.

Belongs to the neurotoxin 36 family. 01 subfamily. As to expression, expressed by the venom gland.

The protein localises to the secreted. Its function is as follows. Probable ion channel inhibitor. The protein is U5-theraphotoxin-Cg1a of Chilobrachys guangxiensis (Chinese earth tiger tarantula).